The sequence spans 443 residues: Glutamate--tRNA ligase 1 (443 aa).

The 'HIGH' region signature appears at 8–18; it reads PSPTGRLHVGN. The 'KMSKS' region motif lies at 239-243; it reads KLSKR. Lys-242 serves as a coordination point for ATP.

It belongs to the class-I aminoacyl-tRNA synthetase family. Glutamate--tRNA ligase type 1 subfamily. As to quaternary structure, monomer.

The protein resides in the cytoplasm. It catalyses the reaction tRNA(Glu) + L-glutamate + ATP = L-glutamyl-tRNA(Glu) + AMP + diphosphate. In terms of biological role, catalyzes the attachment of glutamate to tRNA(Glu) in a two-step reaction: glutamate is first activated by ATP to form Glu-AMP and then transferred to the acceptor end of tRNA(Glu). The sequence is that of Glutamate--tRNA ligase 1 from Rhizorhabdus wittichii (strain DSM 6014 / CCUG 31198 / JCM 15750 / NBRC 105917 / EY 4224 / RW1) (Sphingomonas wittichii).